Reading from the N-terminus, the 48-residue chain is Small, acid-soluble spore protein O (48 aa).

The disordered stretch occupies residues 1–23 (MVKRKANHVINGMNDAKSQGKGA).

The protein belongs to the SspO family.

The protein localises to the spore core. The chain is Small, acid-soluble spore protein O from Bacillus velezensis (strain DSM 23117 / BGSC 10A6 / LMG 26770 / FZB42) (Bacillus amyloliquefaciens subsp. plantarum).